The chain runs to 758 residues: Meiotic driver SPOK4 (758 aa).

Positions 4–41 (KDRITQLLRKLEEAKAREEEAKAREAQERCEKERLQLE) form a coiled coil. Disordered stretches follow at residues 180-230 (ELTQ…GVGI) and 414-499 (LSSA…MADP). Positions 181-190 (LTQEDDRSSG) are enriched in basic and acidic residues. Residues 416–429 (SAASSQNTENSEYT) are compositionally biased toward polar residues. Positions 457–468 (NEHDEHDEDHSE) are enriched in basic and acidic residues.

It is found in the cytoplasm. The protein localises to the nucleus. Functionally, promotes unequal transmission of alleles from the parental zygote to progeny spores by acting as poison/antidote system, leading to poisoning of progeny that do not inherit the allele. May possess DNA nuclease activity that leads to spore killing, and a kinase activity that confers resistance to the nuclease activity. Can suppress meiotic drive by the P.comata SPOK1 protein. The chain is Meiotic driver SPOK4 from Podospora anserina (Pleurage anserina).